Here is a 41-residue protein sequence, read N- to C-terminus: Large ribosomal subunit protein bL36 (41 aa).

This sequence belongs to the bacterial ribosomal protein bL36 family.

This chain is Large ribosomal subunit protein bL36 (rpmJ), found in Agrobacterium fabrum (strain C58 / ATCC 33970) (Agrobacterium tumefaciens (strain C58)).